The sequence spans 829 residues: Ectonucleotide pyrophosphatase/phosphodiesterase C27A7.1 (829 aa).

The helical; Signal-anchor for type II membrane protein transmembrane segment at 54-74 (VIGIAVLLLAMVVIVVIVLLL) threads the bilayer. Catalysis depends on Thr-224, which acts as the Nucleophile. 8 N-linked (GlcNAc...) asparagine glycosylation sites follow: Asn-296, Asn-424, Asn-514, Asn-542, Asn-582, Asn-649, Asn-733, and Asn-748. Cys-439 and Cys-782 are disulfide-bonded.

The protein belongs to the nucleotide pyrophosphatase/phosphodiesterase family.

The protein localises to the membrane. Probable phosphodiesterase. The chain is Ectonucleotide pyrophosphatase/phosphodiesterase C27A7.1 from Caenorhabditis elegans.